Here is a 313-residue protein sequence, read N- to C-terminus: 2-phosphoglycerate kinase (313 aa).

The ATP-cone domain occupies 8–95 (NKILVKDKDY…LWRRVLKKHS (88 aa)).

The protein belongs to the 2-phosphoglycerate kinase family. Requires a divalent metal cation as cofactor.

It catalyses the reaction (2R)-2-phosphoglycerate + ATP = (2R)-2,3-bisphosphoglycerate + ADP + H(+). Its pathway is thermoadapter biosynthesis; cyclic 2,3-diphosphoglycerate biosynthesis; cyclic 2,3-diphosphoglycerate from 2-phospho-D-glycerate: step 1/2. Functionally, catalyzes the phosphorylation of 2-phosphoglycerate to 2,3-diphosphoglycerate. Involved in the biosynthesis of cyclic 2,3-bisphosphoglycerate, a thermoprotectant. This Methanococcus vannielii (strain ATCC 35089 / DSM 1224 / JCM 13029 / OCM 148 / SB) protein is 2-phosphoglycerate kinase.